The chain runs to 226 residues: ATP synthase F(0) complex subunit a (226 aa).

6 helical membrane-spanning segments follow: residues 12-32 (PTMMGLPIVILIIMFPSILFP), 68-88 (WTLMLMSLILFIGSTNLLGLL), 97-117 (QLSMNLGMAIPLWAGTVFMGF), 135-155 (IFLIPMLVIIETISLFIQPMA), 164-184 (ITAGHLLIHLIGGATLALMDI), and 189-209 (ALITFIILILLTILEFAVAMI).

It belongs to the ATPase A chain family. As to quaternary structure, component of the ATP synthase complex composed at least of ATP5F1A/subunit alpha, ATP5F1B/subunit beta, ATP5MC1/subunit c (homooctomer), MT-ATP6/subunit a, MT-ATP8/subunit 8, ATP5ME/subunit e, ATP5MF/subunit f, ATP5MG/subunit g, ATP5MK/subunit k, ATP5MJ/subunit j, ATP5F1C/subunit gamma, ATP5F1D/subunit delta, ATP5F1E/subunit epsilon, ATP5PF/subunit F6, ATP5PB/subunit b, ATP5PD/subunit d, ATP5PO/subunit OSCP. ATP synthase complex consists of a soluble F(1) head domain (subunits alpha(3) and beta(3)) - the catalytic core - and a membrane F(0) domain - the membrane proton channel (subunits c, a, 8, e, f, g, k and j). These two domains are linked by a central stalk (subunits gamma, delta, and epsilon) rotating inside the F1 region and a stationary peripheral stalk (subunits F6, b, d, and OSCP). Interacts with DNAJC30; interaction is direct.

Its subcellular location is the mitochondrion inner membrane. It catalyses the reaction H(+)(in) = H(+)(out). In terms of biological role, subunit a, of the mitochondrial membrane ATP synthase complex (F(1)F(0) ATP synthase or Complex V) that produces ATP from ADP in the presence of a proton gradient across the membrane which is generated by electron transport complexes of the respiratory chain. ATP synthase complex consist of a soluble F(1) head domain - the catalytic core - and a membrane F(1) domain - the membrane proton channel. These two domains are linked by a central stalk rotating inside the F(1) region and a stationary peripheral stalk. During catalysis, ATP synthesis in the catalytic domain of F(1) is coupled via a rotary mechanism of the central stalk subunits to proton translocation. With the subunit c (ATP5MC1), forms the proton-conducting channel in the F(0) domain, that contains two crucial half-channels (inlet and outlet) that facilitate proton movement from the mitochondrial intermembrane space (IMS) into the matrix. Protons are taken up via the inlet half-channel and released through the outlet half-channel, following a Grotthuss mechanism. This chain is ATP synthase F(0) complex subunit a, found in Equus asinus (Donkey).